The following is a 177-amino-acid chain: MGSGAGNFLKVLLRNFDVLAGPVVSLVYPLYASVQAIETQSHADDKQWLTYWVLYSLLTLIELTFAKLIEWLPIWSYMKLILTCWLVIPYFSGAAYVYEHFVRPVFVNPRSINIWYVPKKMDIFRKPDDVLTAAEKYIAENGPDAFEKILSRADKSKRYNKHEYESYETMYGEGYQY.

The next 3 helical transmembrane spans lie at 18–38 (VLAG…QAIE), 47–67 (QWLT…TFAK), and 68–88 (LIEW…WLVI).

The protein belongs to the DP1 family. As to expression, predominantly expressed in flower buds and stem.

The protein localises to the membrane. The sequence is that of HVA22-like protein a (HVA22A) from Arabidopsis thaliana (Mouse-ear cress).